The chain runs to 379 residues: UPF0754 protein BpOF4_11355 (379 aa).

2 helical membrane-spanning segments follow: residues 6–26 (FIGFMVVIGAVIGGATNSLAI) and 359–379 (LGALLGGMIGFIQGLLVLFIG).

Belongs to the UPF0754 family.

It is found in the cell membrane. The sequence is that of UPF0754 protein BpOF4_11355 from Alkalihalophilus pseudofirmus (strain ATCC BAA-2126 / JCM 17055 / OF4) (Bacillus pseudofirmus).